The sequence spans 274 residues: Large ribosomal subunit protein uL2 (274 aa).

The segment at 222 to 274 is disordered; that stretch reads GVAMNPVDHPHGGGEGRGKGHHPQSPWGQLAKGYKTRRGKKASDKLIVRRRNG. Residues 229 to 239 show a composition bias toward basic and acidic residues; it reads DHPHGGGEGRG.

The protein belongs to the universal ribosomal protein uL2 family. As to quaternary structure, part of the 50S ribosomal subunit. Forms a bridge to the 30S subunit in the 70S ribosome.

One of the primary rRNA binding proteins. Required for association of the 30S and 50S subunits to form the 70S ribosome, for tRNA binding and peptide bond formation. It has been suggested to have peptidyltransferase activity; this is somewhat controversial. Makes several contacts with the 16S rRNA in the 70S ribosome. In Thermosipho melanesiensis (strain DSM 12029 / CIP 104789 / BI429), this protein is Large ribosomal subunit protein uL2.